The chain runs to 291 residues: ATP synthase gamma chain (291 aa).

Belongs to the ATPase gamma chain family. F-type ATPases have 2 components, CF(1) - the catalytic core - and CF(0) - the membrane proton channel. CF(1) has five subunits: alpha(3), beta(3), gamma(1), delta(1), epsilon(1). CF(0) has three main subunits: a, b and c.

The protein localises to the cell inner membrane. Its function is as follows. Produces ATP from ADP in the presence of a proton gradient across the membrane. The gamma chain is believed to be important in regulating ATPase activity and the flow of protons through the CF(0) complex. In Rhodopseudomonas palustris (strain HaA2), this protein is ATP synthase gamma chain.